The sequence spans 515 residues: Maturase K (515 aa).

This sequence belongs to the intron maturase 2 family. MatK subfamily.

Its subcellular location is the plastid. It localises to the chloroplast. Usually encoded in the trnK tRNA gene intron. Probably assists in splicing its own and other chloroplast group II introns. This is Maturase K from Pinus uncinata (Mountain pine).